The following is a 189-amino-acid chain: UPF0301 protein CF0373 (189 aa).

Belongs to the UPF0301 (AlgH) family.

The polypeptide is UPF0301 protein CF0373 (Chlamydia felis (strain Fe/C-56) (Chlamydophila felis)).